The sequence spans 140 residues: Small ribosomal subunit protein uS8c (140 aa).

It belongs to the universal ribosomal protein uS8 family. Part of the 30S ribosomal subunit.

Its subcellular location is the plastid. The protein localises to the chloroplast. One of the primary rRNA binding proteins, it binds directly to 16S rRNA central domain where it helps coordinate assembly of the platform of the 30S subunit. This chain is Small ribosomal subunit protein uS8c (rps8), found in Euglena gracilis.